Reading from the N-terminus, the 697-residue chain is Elongation factor G 2 (697 aa).

The tr-type G domain maps to 5–280; that stretch reads SLYRNIGIFA…AVVDYLPSPT (276 aa). GTP is bound by residues 14–21, 78–82, and 132–135; these read AHVDAGKT, DTPGH, and NKLD.

This sequence belongs to the TRAFAC class translation factor GTPase superfamily. Classic translation factor GTPase family. EF-G/EF-2 subfamily.

The protein resides in the cytoplasm. Functionally, catalyzes the GTP-dependent ribosomal translocation step during translation elongation. During this step, the ribosome changes from the pre-translocational (PRE) to the post-translocational (POST) state as the newly formed A-site-bound peptidyl-tRNA and P-site-bound deacylated tRNA move to the P and E sites, respectively. Catalyzes the coordinated movement of the two tRNA molecules, the mRNA and conformational changes in the ribosome. The sequence is that of Elongation factor G 2 from Saccharophagus degradans (strain 2-40 / ATCC 43961 / DSM 17024).